Here is a 514-residue protein sequence, read N- to C-terminus: uncharacterized protein (514 aa).

The protein to E.coli YjjI.

This is an uncharacterized protein from Haemophilus influenzae (strain ATCC 51907 / DSM 11121 / KW20 / Rd).